Here is a 504-residue protein sequence, read N- to C-terminus: Cytochrome P450 2S1 (504 aa).

Cys440 is a heme binding site.

It belongs to the cytochrome P450 family. Heme is required as a cofactor. As to expression, expressed at higher levels in extrahepatic tissues including trachea, lung, stomach, small intestine, colon, kidney, breast, placenta and spleen. Expressed in peripheral blood leukocytes. Constitutively expressed in skin (at protein level).

The protein localises to the endoplasmic reticulum membrane. It is found in the microsome membrane. The enzyme catalyses all-trans-retinoate + reduced [NADPH--hemoprotein reductase] + O2 = all-trans-5,6-epoxyretinoate + oxidized [NADPH--hemoprotein reductase] + H2O + H(+). It carries out the reaction all-trans-retinoate + reduced [NADPH--hemoprotein reductase] + O2 = all-trans-4-hydroxyretinoate + oxidized [NADPH--hemoprotein reductase] + H2O + H(+). It catalyses the reaction (5S)-hydroperoxy-(6E,8Z,11Z,14Z)-eicosatetraenoate = 5-oxo-(6E,8Z,11Z,14Z)-eicosatetraenoate + H2O. The catalysed reaction is (12S)-hydroperoxy-(5Z,8Z,10E,14Z)-eicosatetraenoate = 12-oxo-(5Z,8Z,10E,14Z)-eicosatetraenoate + H2O. The enzyme catalyses (15S)-hydroperoxy-(5Z,8Z,11Z,13E)-eicosatetraenoate = 15-oxo-(5Z,8Z,11Z,13E)-eicosatetraenoate + H2O. It carries out the reaction prostaglandin H2 = thromboxane A2. It catalyses the reaction prostaglandin H2 = (12S)-hydroxy-(5Z,8E,10E)-heptadecatrienoate + malonaldehyde. The catalysed reaction is (13S)-hydroperoxy-(9Z,11E)-octadecadienoate = 13-oxo-(9Z,11E)-octadecadienoate + H2O. It participates in lipid metabolism; fatty acid metabolism. In terms of biological role, a cytochrome P450 monooxygenase involved in the metabolism of retinoids and eicosanoids. In epidermis, may contribute to the oxidative metabolism of all-trans-retinoic acid. For this activity, uses molecular oxygen inserting one oxygen atom into a substrate, and reducing the second into a water molecule, with two electrons provided by NADPH via cytochrome P450 reductase (NADPH--hemoprotein reductase). Additionally, displays peroxidase and isomerase activities toward various oxygenated eicosanoids such as prostaglandin H2 (PGH2) and hydroperoxyeicosatetraenoates (HPETEs). Independently of cytochrome P450 reductase, NADPH, and O2, catalyzes the breakdown of PGH2 to hydroxyheptadecatrienoic acid (HHT) and malondialdehyde (MDA), which is known to act as a mediator of DNA damage. In Homo sapiens (Human), this protein is Cytochrome P450 2S1.